A 208-amino-acid polypeptide reads, in one-letter code: 7-carboxy-7-deazaguanine synthase (208 aa).

Residues 23-25 and R38 each bind substrate; that span reads LQG. The Radical SAM core domain maps to 29-208; that stretch reads WAGGNAFFIR…LQTHKYLGVR (180 aa). Positions 42, 46, and 49 each coordinate [4Fe-4S] cluster. T83 is a substrate binding site. S-adenosyl-L-methionine contacts are provided by residues G85 and 126–128; that span reads SPK.

This sequence belongs to the radical SAM superfamily. 7-carboxy-7-deazaguanine synthase family. As to quaternary structure, homodimer. [4Fe-4S] cluster serves as cofactor. The cofactor is S-adenosyl-L-methionine. Requires Mg(2+) as cofactor.

It carries out the reaction 6-carboxy-5,6,7,8-tetrahydropterin + H(+) = 7-carboxy-7-deazaguanine + NH4(+). It participates in purine metabolism; 7-cyano-7-deazaguanine biosynthesis. Functionally, catalyzes the complex heterocyclic radical-mediated conversion of 6-carboxy-5,6,7,8-tetrahydropterin (CPH4) to 7-carboxy-7-deazaguanine (CDG), a step common to the biosynthetic pathways of all 7-deazapurine-containing compounds. The chain is 7-carboxy-7-deazaguanine synthase from Synechocystis sp. (strain ATCC 27184 / PCC 6803 / Kazusa).